The chain runs to 122 residues: Large ribosomal subunit protein uL18 (122 aa).

The protein belongs to the universal ribosomal protein uL18 family. In terms of assembly, part of the 50S ribosomal subunit; part of the 5S rRNA/L5/L18/L25 subcomplex. Contacts the 5S and 23S rRNAs.

Its function is as follows. This is one of the proteins that bind and probably mediate the attachment of the 5S RNA into the large ribosomal subunit, where it forms part of the central protuberance. The protein is Large ribosomal subunit protein uL18 of Leptospira borgpetersenii serovar Hardjo-bovis (strain JB197).